A 170-amino-acid polypeptide reads, in one-letter code: uncharacterized protein (170 aa).

5 helical membrane passes run 21 to 41 (NISL…AAVL), 55 to 75 (AYTS…TLLL), 86 to 106 (TGIA…YWLW), 117 to 137 (ISGV…VSLL), and 143 to 163 (FSAA…TLLP). An EamA domain is found at 35–161 (IIFAAVLRWT…IMLATLGSTL (127 aa)).

The protein belongs to the EamA transporter family.

It is found in the cell membrane. This is an uncharacterized protein from Haemophilus influenzae (strain ATCC 51907 / DSM 11121 / KW20 / Rd).